The following is a 252-amino-acid chain: Imidazole glycerol phosphate synthase subunit HisF (252 aa).

Residues D13 and D132 contribute to the active site.

This sequence belongs to the HisA/HisF family. Heterodimer of HisH and HisF.

Its subcellular location is the cytoplasm. The enzyme catalyses 5-[(5-phospho-1-deoxy-D-ribulos-1-ylimino)methylamino]-1-(5-phospho-beta-D-ribosyl)imidazole-4-carboxamide + L-glutamine = D-erythro-1-(imidazol-4-yl)glycerol 3-phosphate + 5-amino-1-(5-phospho-beta-D-ribosyl)imidazole-4-carboxamide + L-glutamate + H(+). It participates in amino-acid biosynthesis; L-histidine biosynthesis; L-histidine from 5-phospho-alpha-D-ribose 1-diphosphate: step 5/9. Its function is as follows. IGPS catalyzes the conversion of PRFAR and glutamine to IGP, AICAR and glutamate. The HisF subunit catalyzes the cyclization activity that produces IGP and AICAR from PRFAR using the ammonia provided by the HisH subunit. This Campylobacter fetus subsp. fetus (strain 82-40) protein is Imidazole glycerol phosphate synthase subunit HisF.